We begin with the raw amino-acid sequence, 307 residues long: NAD kinase (307 aa).

Catalysis depends on D78, which acts as the Proton acceptor. NAD(+)-binding positions include D78–G79, H83, N154–E155, R165, R182, D184, and Q255.

The protein belongs to the NAD kinase family. Requires a divalent metal cation as cofactor.

The protein resides in the cytoplasm. The catalysed reaction is NAD(+) + ATP = ADP + NADP(+) + H(+). In terms of biological role, involved in the regulation of the intracellular balance of NAD and NADP, and is a key enzyme in the biosynthesis of NADP. Catalyzes specifically the phosphorylation on 2'-hydroxyl of the adenosine moiety of NAD to yield NADP. The polypeptide is NAD kinase (Halorhodospira halophila (strain DSM 244 / SL1) (Ectothiorhodospira halophila (strain DSM 244 / SL1))).